A 722-amino-acid polypeptide reads, in one-letter code: Zinc finger protein 219 (722 aa).

The interval 1–21 (MEGSRPRAPSGHLAPSPPAFD) is disordered. At Ser-16 the chain carries Phosphoserine. 2 C2H2-type zinc fingers span residues 57–79 (FPCP…LRAH) and 85–107 (FQCP…LRTH). The tract at residues 137 to 160 (ARSSGGMQATPATEGLARPQAPSS) is disordered. 2 C2H2-type zinc fingers span residues 163–186 (FRCP…HILH) and 189–212 (WKCG…LTAH). Residues 215 to 275 (PERPLAATSA…EEPPAPPEFR (61 aa)) are disordered. 2 stretches are compositionally biased toward pro residues: residues 225–247 (APPP…PQPE) and 259–272 (TPAP…PAPP). 2 C2H2-type zinc fingers span residues 274–296 (FRCQ…MRKH) and 302–324 (HACP…MKVH). Positions 384-495 (LRAGEGRPNG…GTRPEGGRGA (112 aa)) are disordered. The segment covering 390-404 (RPNGEGAEPGPGRSF) has biased composition (gly residues). The span at 425 to 438 (EPEEEEEVVEAEEE) shows a compositional bias: acidic residues. The segment covering 463–477 (SASAAGAQARSTATQ) has biased composition (low complexity). 2 C2H2-type zinc fingers span residues 498–520 (KDCP…LRVH) and 526–548 (YKCP…LQRH). 2 disordered regions span residues 542–648 (KYHL…LHRC) and 668–722 (HHSR…GQER). Residues 558 to 568 (PGPPPEPPPPS) are compositionally biased toward pro residues. The segment covering 634–643 (GPGGEAGPGG) has biased composition (gly residues). The C2H2-type 9 zinc-finger motif lies at 646–668 (HRCLFCPFATGAPELMALHLQVH). Residues 668–677 (HHSRRARGRR) show a composition bias toward basic residues. Position 692 is a phosphoserine (Ser-692). Phosphothreonine is present on Thr-695. The residue at position 698 (Ser-698) is a Phosphoserine.

The protein belongs to the krueppel C2H2-type zinc-finger protein family. Interacts with SOX9 (via C-terminus). In terms of tissue distribution, ubiquitous.

The protein resides in the nucleus. Functionally, transcriptional regulator. Recognizes and binds 2 copies of the core DNA sequence motif 5'-GGGGG-3'. Binds to the HMGN1 promoter and may repress HMGN1 expression. Regulates SNCA expression in primary cortical neurons. Binds to the COL2A1 promoter and activates COL2A1 expression, as part of a complex with SOX9. Plays a role in chondrocyte differentiation. The sequence is that of Zinc finger protein 219 (ZNF219) from Homo sapiens (Human).